The primary structure comprises 127 residues: Aspartate 1-decarboxylase (127 aa).

Serine 25 functions as the Schiff-base intermediate with substrate; via pyruvic acid in the catalytic mechanism. Residue serine 25 is modified to Pyruvic acid (Ser). Position 57 (threonine 57) interacts with substrate. Tyrosine 58 functions as the Proton donor in the catalytic mechanism. 73–75 is a binding site for substrate; sequence GAA.

This sequence belongs to the PanD family. Heterooctamer of four alpha and four beta subunits. Pyruvate serves as cofactor. Post-translationally, is synthesized initially as an inactive proenzyme, which is activated by self-cleavage at a specific serine bond to produce a beta-subunit with a hydroxyl group at its C-terminus and an alpha-subunit with a pyruvoyl group at its N-terminus.

Its subcellular location is the cytoplasm. It catalyses the reaction L-aspartate + H(+) = beta-alanine + CO2. The protein operates within cofactor biosynthesis; (R)-pantothenate biosynthesis; beta-alanine from L-aspartate: step 1/1. Catalyzes the pyruvoyl-dependent decarboxylation of aspartate to produce beta-alanine. In Vesicomyosocius okutanii subsp. Calyptogena okutanii (strain HA), this protein is Aspartate 1-decarboxylase.